The chain runs to 573 residues: Estrogen receptor beta (573 aa).

Positions 15–170 (QEVDSSKVGE…CFAGKGDMHF (156 aa)) are modulating. 2 NR C4-type zinc fingers span residues 171-191 (CAVC…CEGC) and 207-231 (CPAT…LRKC). The nuclear receptor DNA-binding region spans 171-236 (CAVCHDYASG…RLRKCYEVGM (66 aa)). An NR LBD domain is found at 291-527 (TPEQLINRII…DLLLEMLDAN (237 aa)). 2 stretches are compositionally biased toward low complexity: residues 534 to 552 (MSAS…AQSQ) and 559 to 573 (CSGE…SSTI). The tract at residues 534-573 (MSASYSSQPSPWSQAAQSQPGPPPSCSGECPCPPKESSTI) is disordered.

The protein belongs to the nuclear hormone receptor family. NR3 subfamily. In terms of assembly, binds DNA as a homodimer. Can form a heterodimer with ER-alpha. Liver.

The protein localises to the nucleus. Its function is as follows. Binds estrogens with an affinity similar to that of ER-alpha, and activates expression of reporter genes containing estrogen response elements (ERE) in an estrogen-dependent manner. The protein is Estrogen receptor beta (esr2) of Anguilla japonica (Japanese eel).